We begin with the raw amino-acid sequence, 912 residues long: Bifunctional uridylyltransferase/uridylyl-removing enzyme (912 aa).

The tract at residues 1-369 is uridylyltransferase; sequence MLPRIANQRA…FFASLRSRRK (369 aa). The interval 370 to 722 is uridylyl-removing; that stretch reads KVGPFFIEGG…AHWYPARGAT (353 aa). The region spanning 486–608 is the HD domain; the sequence is VDEHTIRAIG…VQSQERLRLL (123 aa). ACT domains follow at residues 723 to 802 and 834 to 912; these read LVTV…LVPQ and VIEV…KDAA.

This sequence belongs to the GlnD family. It depends on Mg(2+) as a cofactor.

The enzyme catalyses [protein-PII]-L-tyrosine + UTP = [protein-PII]-uridylyl-L-tyrosine + diphosphate. It catalyses the reaction [protein-PII]-uridylyl-L-tyrosine + H2O = [protein-PII]-L-tyrosine + UMP + H(+). With respect to regulation, uridylyltransferase (UTase) activity is inhibited by glutamine, while glutamine activates uridylyl-removing (UR) activity. In terms of biological role, modifies, by uridylylation and deuridylylation, the PII regulatory proteins (GlnB and homologs), in response to the nitrogen status of the cell that GlnD senses through the glutamine level. Under low glutamine levels, catalyzes the conversion of the PII proteins and UTP to PII-UMP and PPi, while under higher glutamine levels, GlnD hydrolyzes PII-UMP to PII and UMP (deuridylylation). Thus, controls uridylylation state and activity of the PII proteins, and plays an important role in the regulation of nitrogen assimilation and metabolism. The protein is Bifunctional uridylyltransferase/uridylyl-removing enzyme of Novosphingobium aromaticivorans (strain ATCC 700278 / DSM 12444 / CCUG 56034 / CIP 105152 / NBRC 16084 / F199).